A 65-amino-acid chain; its full sequence is Large ribosomal subunit protein bL35 (65 aa).

It belongs to the bacterial ribosomal protein bL35 family.

This chain is Large ribosomal subunit protein bL35, found in Sorangium cellulosum (strain So ce56) (Polyangium cellulosum (strain So ce56)).